Here is a 56-residue protein sequence, read N- to C-terminus: Large ribosomal subunit protein bL33A (56 aa).

The protein belongs to the bacterial ribosomal protein bL33 family.

This Sorangium cellulosum (strain So ce56) (Polyangium cellulosum (strain So ce56)) protein is Large ribosomal subunit protein bL33A.